The primary structure comprises 126 residues: MRILFLIAFMYGCVHPYVNADEIKCPNLNIVTSSGEFRCTGCVKFMPNFSYMYWLAKDMRSDEDAKFIEHLGEGIKEDETVSTIDGRIVTLQKVLHVTDTNKFDNYRFTCVLTTIDGVSKKNIWLK.

Residues 1 to 20 form the signal peptide; sequence MRILFLIAFMYGCVHPYVNA.

It belongs to the orthopoxvirus OPG022 family.

Its subcellular location is the secreted. In terms of biological role, soluble IL18-binding protein that may modulate the host antiviral response. This Bos taurus (Bovine) protein is Interleukin-18-binding protein (OPG022).